We begin with the raw amino-acid sequence, 235 residues long: Modulator of macroautophagy TMEM150B (235 aa).

Residues 1-8 (MWGYLSLL) lie on the Cytoplasmic side of the membrane. A helical membrane pass occupies residues 9–29 (PMCLAFWAIAGIWTVFSLAVV). At 30–51 (NKAVNLTDGFPYISVCGNVPPQ) the chain is on the extracellular side. The N-linked (GlcNAc...) asparagine glycan is linked to Asn34. The chain crosses the membrane as a helical span at residues 52–72 (SCIFSQVLNIGAASAAWICIL). Residues 73–88 (RYYQLRDWGVRKWHNQ) lie on the Cytoplasmic side of the membrane. Residues 89-109 (VILWTGLLCALGTSIVGNFQE) form a helical membrane-spanning segment. The Extracellular segment spans residues 110–116 (KNQRATH). Residues 117–137 (LTGAFLAFFVGIVYFWLQLFL) traverse the membrane as a helical segment. Residues 138–156 (SWRMKNLPQPGAPWIGPLR) lie on the Cytoplasmic side of the membrane. The helical transmembrane segment at 157-177 (LVLCSACFILEVAMVVLHSWS) threads the bilayer. Topologically, residues 178–180 (MRS) are extracellular. A helical membrane pass occupies residues 181–201 (VSAICEWVAAMLLFILFGLLA). Over 202 to 235 (VDFSRLDSCTLCLQPGSGSLRPPPDSPTSLHVQL) the chain is Cytoplasmic.

Belongs to the DRAM/TMEM150 family.

Its subcellular location is the cell membrane. The protein localises to the endosome membrane. The protein resides in the cytoplasmic vesicle. It is found in the autophagosome membrane. Modulator of macroautophagy that causes accumulation of autophagosomes under basal conditions and enhances autophagic flux. Represses cell death and promotes long-term clonogenic survival of cells grown in the absence of glucose in a macroautophagy-independent manner. May have some role in extracellular matrix engulfment or growth factor receptor recycling, both of which can modulate cell survival. The sequence is that of Modulator of macroautophagy TMEM150B from Bos taurus (Bovine).